Here is a 66-residue protein sequence, read N- to C-terminus: Surface composition regulator (66 aa).

Belongs to the GlgS family.

Functionally, major determinant of cell surface composition. Negatively regulates motility, adhesion and synthesis of biofilm exopolysaccharides. This chain is Surface composition regulator, found in Shigella dysenteriae serotype 1 (strain Sd197).